Reading from the N-terminus, the 229-residue chain is Putative germin-like protein subfamily 1 member 2 (229 aa).

Residues 1–24 (MKGLVQFLVAKIILLVLASTFVHC) form the signal peptide. C34 and C50 form a disulfide bridge. N-linked (GlcNAc...) asparagine glycans are attached at residues N38 and N71. Residues 64–215 (SGLNIPGNTS…AFALDVNIVR (152 aa)) form the Cupin type-1 domain. The Mn(2+) site is built by H112 and H114. N139 carries N-linked (GlcNAc...) asparagine glycosylation. Residue H163 participates in Mn(2+) binding.

The protein belongs to the germin family. Oligomer (believed to be a pentamer but probably hexamer).

It localises to the secreted. It is found in the extracellular space. The protein resides in the apoplast. Its function is as follows. May play a role in plant defense. Probably has no oxalate oxidase activity even if the active site is conserved. The chain is Putative germin-like protein subfamily 1 member 2 from Arabidopsis thaliana (Mouse-ear cress).